A 232-amino-acid chain; its full sequence is MSLIDTVRNTLVPVHREGYRFIAIFFVVSLALGFLWEPLMWIGFVLTAWCAYFFRDPERMTPIDDDLVISPADGTVSSVATVMPPEELGLGSEPMLRISVFMNVFNCHVNRAPMGGTVRRIAYRAGKFVNAELDKASQENERNGLVIETKHGQIGVVQIAGLVARRILCWTRESASLEAGERFGLIRFGSRLDVFLPAGAEPRVTVGQTATGGETVLAEFGSAKGPVISRRA.

Ser190 (schiff-base intermediate with substrate; via pyruvic acid) is an active-site residue. Residue Ser190 is modified to Pyruvic acid (Ser); by autocatalysis.

It belongs to the phosphatidylserine decarboxylase family. PSD-A subfamily. As to quaternary structure, heterodimer of a large membrane-associated beta subunit and a small pyruvoyl-containing alpha subunit. The cofactor is pyruvate. Post-translationally, is synthesized initially as an inactive proenzyme. Formation of the active enzyme involves a self-maturation process in which the active site pyruvoyl group is generated from an internal serine residue via an autocatalytic post-translational modification. Two non-identical subunits are generated from the proenzyme in this reaction, and the pyruvate is formed at the N-terminus of the alpha chain, which is derived from the carboxyl end of the proenzyme. The post-translation cleavage follows an unusual pathway, termed non-hydrolytic serinolysis, in which the side chain hydroxyl group of the serine supplies its oxygen atom to form the C-terminus of the beta chain, while the remainder of the serine residue undergoes an oxidative deamination to produce ammonia and the pyruvoyl prosthetic group on the alpha chain.

Its subcellular location is the cell membrane. It catalyses the reaction a 1,2-diacyl-sn-glycero-3-phospho-L-serine + H(+) = a 1,2-diacyl-sn-glycero-3-phosphoethanolamine + CO2. It functions in the pathway phospholipid metabolism; phosphatidylethanolamine biosynthesis; phosphatidylethanolamine from CDP-diacylglycerol: step 2/2. Functionally, catalyzes the formation of phosphatidylethanolamine (PtdEtn) from phosphatidylserine (PtdSer). Important for establishment of root nodule symbiosis with the host plant. This Rhizobium meliloti (strain 1021) (Ensifer meliloti) protein is Phosphatidylserine decarboxylase proenzyme.